We begin with the raw amino-acid sequence, 142 residues long: HTH-type transcriptional repressor NsrR (142 aa).

An HTH rrf2-type domain is found at 2 to 129 (QLTSFTDYGL…DRHTLAELVE (128 aa)). Residues 28–51 (ITEVTQVYGVSRNHMVKIINQLSH) constitute a DNA-binding region (H-T-H motif). Residues C91, C96, and C102 each contribute to the [2Fe-2S] cluster site.

The cofactor is [2Fe-2S] cluster.

In terms of biological role, nitric oxide-sensitive repressor of genes involved in protecting the cell against nitrosative stress. May require iron for activity. In Proteus mirabilis (strain HI4320), this protein is HTH-type transcriptional repressor NsrR.